A 490-amino-acid chain; its full sequence is Betaine aldehyde dehydrogenase (490 aa).

K(+) is bound by residues Thr-26, Ile-27, and Asp-93. Position 150–152 (150–152) interacts with NAD(+); sequence GAW. Lys-162 functions as the Charge relay system in the catalytic mechanism. Residue 176-179 participates in NAD(+) binding; it reads KPSE. Val-180 is a binding site for K(+). 230–233 contributes to the NAD(+) binding site; the sequence is GVAS. Leu-246 contacts K(+). Glu-252 serves as the catalytic Proton acceptor. Residues Gly-254, Cys-286, and Glu-387 each coordinate NAD(+). The active-site Nucleophile is the Cys-286. Cys-286 is subject to Cysteine sulfenic acid (-SOH). Residues Lys-457 and Gly-460 each coordinate K(+). The active-site Charge relay system is the Glu-464.

Belongs to the aldehyde dehydrogenase family. As to quaternary structure, dimer of dimers. K(+) serves as cofactor.

The enzyme catalyses betaine aldehyde + NAD(+) + H2O = glycine betaine + NADH + 2 H(+). It functions in the pathway amine and polyamine biosynthesis; betaine biosynthesis via choline pathway; betaine from betaine aldehyde: step 1/1. Its function is as follows. Involved in the biosynthesis of the osmoprotectant glycine betaine. Catalyzes the irreversible oxidation of betaine aldehyde to the corresponding acid. The protein is Betaine aldehyde dehydrogenase of Escherichia coli O157:H7.